The following is a 92-amino-acid chain: Large ribosomal subunit protein bL28 (92 aa).

Positions 1-34 (MGRECEITGKKTMFGNNVPRKGLSRKKGGGGQHI) are disordered.

It belongs to the bacterial ribosomal protein bL28 family.

This chain is Large ribosomal subunit protein bL28, found in Borrelia turicatae (strain 91E135).